The following is a 290-amino-acid chain: Nucleotide-binding protein BAV3158 (290 aa).

9–16 (GISGSGKS) is a binding site for ATP. 58–61 (DVRS) is a binding site for GTP.

This sequence belongs to the RapZ-like family.

Its function is as follows. Displays ATPase and GTPase activities. The polypeptide is Nucleotide-binding protein BAV3158 (Bordetella avium (strain 197N)).